We begin with the raw amino-acid sequence, 516 residues long: L-amino-acid oxidase (516 aa).

An N-terminal signal peptide occupies residues 1-18 (MNVFFMFSLLFLAALGSC). A disulfide bridge links cysteine 28 with cysteine 191. FAD contacts are provided by residues 61 to 62 (MS), 81 to 82 (EA), arginine 89, and 105 to 108 (GPMR). Arginine 108 contributes to the substrate binding site. N-linked (GlcNAc...) asparagine glycosylation occurs at asparagine 190. Histidine 241 contributes to the substrate binding site. An FAD-binding site is contributed by valine 279. Cysteines 349 and 430 form a disulfide. An N-linked (GlcNAc...) asparagine glycan is attached at asparagine 379. Tyrosine 390 serves as a coordination point for substrate. Residues glutamate 475, 481–486 (HGWIDS), and 482–487 (GWIDSS) contribute to the FAD site. Substrate contacts are provided by residues 481-482 (HG) and 482-483 (GW).

The protein belongs to the flavin monoamine oxidase family. FIG1 subfamily. Homodimer; non-covalently linked. It depends on FAD as a cofactor. Post-translationally, N-glycosylated. As to expression, expressed by the venom gland.

Its subcellular location is the secreted. The enzyme catalyses an L-alpha-amino acid + O2 + H2O = a 2-oxocarboxylate + H2O2 + NH4(+). Its function is as follows. Catalyzes an oxidative deamination of predominantly hydrophobic and aromatic L-amino acids, thus producing hydrogen peroxide that may contribute to the diverse toxic effects of this enzyme. Exhibits diverse biological activities, such as hemorrhage, hemolysis, edema, apoptosis of vascular endothelial cells or tumor cell lines, antibacterial and antiparasitic activities, as well as regulation of platelet aggregation. Effects of snake L-amino oxidases on platelets are controversial, since they either induce aggregation or inhibit agonist-induced aggregation. These different effects are probably due to different experimental conditions. Displays dose-dependent inhibition on HIV-1 infection and replication. The polypeptide is L-amino-acid oxidase (Trimeresurus stejnegeri (Chinese green tree viper)).